The chain runs to 338 residues: Ornithine carbamoyltransferase, catabolic (338 aa).

Carbamoyl phosphate-binding positions include 58–61, glutamine 85, arginine 109, and 136–139; these read STRT and HPTQ. L-ornithine-binding positions include asparagine 168, aspartate 232, and 236–237; that span reads SM. Carbamoyl phosphate contacts are provided by residues 273 to 274 and arginine 318; that span reads CL.

The protein belongs to the aspartate/ornithine carbamoyltransferase superfamily. OTCase family.

The protein localises to the cytoplasm. The catalysed reaction is carbamoyl phosphate + L-ornithine = L-citrulline + phosphate + H(+). It participates in amino-acid degradation; L-arginine degradation via ADI pathway; carbamoyl phosphate from L-arginine: step 2/2. Functionally, reversibly catalyzes the transfer of the carbamoyl group from carbamoyl phosphate (CP) to the N(epsilon) atom of ornithine (ORN) to produce L-citrulline. This chain is Ornithine carbamoyltransferase, catabolic, found in Streptococcus pneumoniae serotype 4 (strain ATCC BAA-334 / TIGR4).